We begin with the raw amino-acid sequence, 403 residues long: F-box only protein 22 (403 aa).

Position 1 is an N-acetylmethionine (Met1). An F-box domain is found at 19–71; it reads STFVLSNLAEVVERVLTFLPAKALLRVACVCRLWRECVRRVLRTHRSVTWISA. At Ser128 the chain carries Phosphoserine. Lys194 carries the N6-acetyllysine modification.

As to quaternary structure, directly interacts with SKP1 and CUL1.

It is found in the cytoplasm. Its subcellular location is the myofibril. The protein resides in the sarcomere. It localises to the z line. Its function is as follows. Substrate-recognition component of the SCF (SKP1-CUL1-F-box protein)-type E3 ubiquitin ligase complex. Promotes the proteasome-dependent degradation of key sarcomeric proteins, such as alpha-actinin (ACTN2) and filamin-C (FLNC), essential for maintenance of normal contractile function. The chain is F-box only protein 22 (FBXO22) from Pongo abelii (Sumatran orangutan).